The following is a 407-amino-acid chain: Biflaviolin synthase CYP158A1 (407 aa).

Positions 1-11 are enriched in polar residues; it reads MTQETTTLTGQ. Positions 1–20 are disordered; it reads MTQETTTLTGQSPPPVRDWP. Flaviolin-binding positions include Arg92, Tyr199, and 290–291; that span reads HR. A heme-binding site is contributed by Cys356.

This sequence belongs to the cytochrome P450 family. The cofactor is heme.

The enzyme catalyses 2 flaviolin + 2 reduced [2Fe-2S]-[ferredoxin] + O2 + H(+) = 3,3'-biflaviolin + 2 oxidized [2Fe-2S]-[ferredoxin] + 2 H2O. It carries out the reaction 2 flaviolin + 2 reduced [2Fe-2S]-[ferredoxin] + O2 + H(+) = 3,8'-biflaviolin + 2 oxidized [2Fe-2S]-[ferredoxin] + 2 H2O. It functions in the pathway pigment biosynthesis. Its function is as follows. Catalyzes oxidative C-C coupling reaction to polymerize flaviolin and form highly conjugated pigments which protect the soil bacterium from deleterious effects of UV irradiation (two isomers of biflaviolin and one triflaviolin). The protein is Biflaviolin synthase CYP158A1 of Streptomyces coelicolor (strain ATCC BAA-471 / A3(2) / M145).